The chain runs to 222 residues: Interleukin-12 subunit alpha (222 aa).

Residues 1-25 (MCPPRGLLLVTILVLLNHLDHLSLA) form the signal peptide. 3 cysteine pairs are disulfide-bonded: Cys40–Cys113, Cys67–Cys199, and Cys88–Cys126. N-linked (GlcNAc...) asparagine glycans are attached at residues Asn42, Asn96, Asn110, and Asn183.

Belongs to the IL-6 superfamily. In terms of assembly, heterodimer with IL12B; disulfide-linked. This heterodimer is known as interleukin IL-12. Heterodimer with EBI3/IL27B; not disulfide-linked. This heterodimer is known as interleukin IL-35. Interacts with NBR1; this interaction promotes IL-12 secretion.

Its subcellular location is the secreted. In terms of biological role, heterodimerizes with IL12B to form the IL-12 cytokine or with EBI3/IL27B to form the IL-35 cytokine. IL-12 is primarily produced by professional antigen-presenting cells (APCs) such as B-cells and dendritic cells (DCs) as well as macrophages and granulocytes and regulates T-cell and natural killer-cell responses, induces the production of interferon-gamma (IFN-gamma), favors the differentiation of T-helper 1 (Th1) cells and is an important link between innate resistance and adaptive immunity. Mechanistically, exerts its biological effects through a receptor composed of IL12R1 and IL12R2 subunits. Binding to the receptor results in the rapid tyrosine phosphorylation of a number of cellular substrates including the JAK family kinases TYK2 and JAK2. In turn, recruited STAT4 gets phosphorylated and translocates to the nucleus where it regulates cytokine/growth factor responsive genes. As part of IL-35, plays essential roles in maintaining the immune homeostasis of the liver microenvironment and also functions as an immune-suppressive cytokine. Mediates biological events through unconventional receptors composed of IL12RB2 and gp130/IL6ST heterodimers or homodimers. Signaling requires the transcription factors STAT1 and STAT4, which form a unique heterodimer that binds to distinct DNA sites. This chain is Interleukin-12 subunit alpha (IL12A), found in Felis catus (Cat).